A 312-amino-acid polypeptide reads, in one-letter code: Porphobilinogen deaminase (312 aa).

An S-(dipyrrolylmethanemethyl)cysteine modification is found at Cys241.

This sequence belongs to the HMBS family. As to quaternary structure, monomer. Dipyrromethane serves as cofactor.

The catalysed reaction is 4 porphobilinogen + H2O = hydroxymethylbilane + 4 NH4(+). It participates in porphyrin-containing compound metabolism; protoporphyrin-IX biosynthesis; coproporphyrinogen-III from 5-aminolevulinate: step 2/4. The protein operates within porphyrin-containing compound metabolism; chlorophyll biosynthesis. Functionally, tetrapolymerization of the monopyrrole PBG into the hydroxymethylbilane pre-uroporphyrinogen in several discrete steps. In Prosthecochloris aestuarii (strain DSM 271 / SK 413), this protein is Porphobilinogen deaminase.